A 189-amino-acid chain; its full sequence is Interferon alpha-B (189 aa).

An N-terminal signal peptide occupies residues 1–23; sequence MAPAWSFLLALLLLSCNAICSLG. 2 cysteine pairs are disulfide-bonded: Cys24–Cys122 and Cys52–Cys162.

It belongs to the alpha/beta interferon family.

It localises to the secreted. Functionally, produced by macrophages, IFN-alpha have antiviral activities. Interferon stimulates the production of two enzymes: a protein kinase and an oligoadenylate synthetase. The chain is Interferon alpha-B (IFNAB) from Bos taurus (Bovine).